The chain runs to 208 residues: Small ribosomal subunit protein uS4 (208 aa).

In terms of domain architecture, S4 RNA-binding spans 98–166 (SRLDNVVYRM…VKEAIEASRN (69 aa)).

It belongs to the universal ribosomal protein uS4 family. As to quaternary structure, part of the 30S ribosomal subunit. Contacts protein S5. The interaction surface between S4 and S5 is involved in control of translational fidelity.

Its function is as follows. One of the primary rRNA binding proteins, it binds directly to 16S rRNA where it nucleates assembly of the body of the 30S subunit. With S5 and S12 plays an important role in translational accuracy. The sequence is that of Small ribosomal subunit protein uS4 from Kosmotoga olearia (strain ATCC BAA-1733 / DSM 21960 / TBF 19.5.1).